Reading from the N-terminus, the 982-residue chain is Glycine dehydrogenase (decarboxylating) (982 aa).

Lys-729 is modified (N6-(pyridoxal phosphate)lysine).

This sequence belongs to the GcvP family. As to quaternary structure, the glycine cleavage system is composed of four proteins: P, T, L and H. Pyridoxal 5'-phosphate serves as cofactor.

The catalysed reaction is N(6)-[(R)-lipoyl]-L-lysyl-[glycine-cleavage complex H protein] + glycine + H(+) = N(6)-[(R)-S(8)-aminomethyldihydrolipoyl]-L-lysyl-[glycine-cleavage complex H protein] + CO2. Functionally, the glycine cleavage system catalyzes the degradation of glycine. The P protein binds the alpha-amino group of glycine through its pyridoxal phosphate cofactor; CO(2) is released and the remaining methylamine moiety is then transferred to the lipoamide cofactor of the H protein. This is Glycine dehydrogenase (decarboxylating) from Ralstonia nicotianae (strain ATCC BAA-1114 / GMI1000) (Ralstonia solanacearum).